The sequence spans 189 residues: Ribonuclease HII (189 aa).

Residues 1-189 (MIAGVDEAGR…PVRRALNIDC (189 aa)) form the RNase H type-2 domain. 3 residues coordinate a divalent metal cation: Asp-6, Glu-7, and Asp-98.

It belongs to the RNase HII family. The cofactor is Mn(2+). It depends on Mg(2+) as a cofactor.

It is found in the cytoplasm. The catalysed reaction is Endonucleolytic cleavage to 5'-phosphomonoester.. Functionally, endonuclease that specifically degrades the RNA of RNA-DNA hybrids. The sequence is that of Ribonuclease HII from Acinetobacter baylyi (strain ATCC 33305 / BD413 / ADP1).